The chain runs to 305 residues: Insulin-like peptide (305 aa).

A signal peptide spans 1 to 22 (MNLSSVYVLASLAVVCLLVKET). 3 disulfide bridges follow: cysteine 28–cysteine 87, cysteine 40–cysteine 100, and cysteine 86–cysteine 91. Residues 52–76 (SVSKRAIDFISEQQAKDYMGAMPHI) constitute a propeptide, connecting peptide. The interval 102–114 (PYSTAPATATPVR) is d. Positions 102–305 (PYSTAPATAT…RDSYHLTELR (204 aa)) are cleaved as a propeptide — d/E peptide. The segment covering 107 to 118 (PATATPVRTTEP) has biased composition (low complexity). Disordered regions lie at residues 107-130 (PATA…PLDG) and 236-305 (HNQT…TELR). Positions 115–305 (TTEPQPEEAE…RDSYHLTELR (191 aa)) are e. Residues 119 to 128 (QPEEAEDDPL) show a composition bias toward acidic residues. 2 stretches are compositionally biased toward basic and acidic residues: residues 236–245 (HNQTDKKEPT) and 291–305 (RRIE…TELR).

Belongs to the insulin family.

The protein localises to the secreted. This chain is Insulin-like peptide (ILP), found in Branchiostoma californiense (California lancelet).